Consider the following 520-residue polypeptide: Cytochrome P450 716A67 (520 aa).

Residues 4–24 form a helical membrane-spanning segment; it reads SLAIYYGIILITVTLGLVYTW. Residue Cys466 coordinates heme.

Belongs to the cytochrome P450 family. Heme serves as cofactor.

Its subcellular location is the membrane. Catalyzes hydroxylation at the C-2 position of different intermediates of the hemolytic sapogenin biosynthetic pathway downstream of oleanolic acid synthesis. The polypeptide is Cytochrome P450 716A67 (Medicago truncatula (Barrel medic)).